A 577-amino-acid chain; its full sequence is Outer spore wall assembly protein SHE10 (577 aa).

An N-terminal signal peptide occupies residues methionine 1–glutamate 23. 2 coiled-coil regions span residues asparagine 379 to glutamate 416 and isoleucine 513 to valine 561. A compositionally biased stretch (basic and acidic residues) spans arginine 525–arginine 545. A disordered region spans residues arginine 525 to leucine 577. The span at serine 562–leucine 577 shows a compositional bias: low complexity.

This sequence belongs to the SHE10 family. Component of the mitochondria-localized RNase mitochondrial RNA-processing (RNase MRP) composed of one single RNA encoded by the NME1 gene and at least 31 proteins. Absent in the nucleus-localized RNase MRP (NuMRP).

It localises to the mitochondrion. In terms of biological role, involved in spore wall assembly. May be a component of the mitochondrial RNase MRP (MtMRP), a ribonucleoprotein endoribonuclease involved in the cleaving RNA transcripts to generate primers for DNA replication in mitochondria. In Saccharomyces cerevisiae (strain RM11-1a) (Baker's yeast), this protein is Outer spore wall assembly protein SHE10.